The chain runs to 506 residues: Arylsulfatase A (506 aa).

Positions 1-17 are cleaved as a signal peptide; that stretch reads MALGTLFLALAAGLSTA. 3 residues coordinate Ca(2+): Asp28, Asp29, and Cys68. The Nucleophile role is filled by Cys68. Residue Cys68 is modified to 3-oxoalanine (Cys). Lys122 serves as a coordination point for substrate. His124 is a catalytic residue. Substrate is bound at residue Ser149. 2 disulfide bridges follow: Cys155-Cys171 and Cys160-Cys167. N-linked (GlcNAc...) asparagine glycosylation is present at Asn157. The N-linked (GlcNAc...) asparagine glycan is linked to Asn183. His228 provides a ligand contact to substrate. Ca(2+) is bound by residues Asp280 and Asn281. 4 disulfide bridges follow: Cys299–Cys413, Cys487–Cys499, Cys488–Cys501, and Cys492–Cys498. A substrate-binding site is contributed by Lys301. Residue Asn349 is glycosylated (N-linked (GlcNAc...) asparagine).

The protein belongs to the sulfatase family. Homodimer at neutral pH and homooctamer at acidic pH. Exists both as a single chain of 58 kDa (component A) or as a chain of 50 kDa (component B) linked by disulfide bond(s) to a 7 kDa chain (component C). Interacts with SUMF1. Requires Ca(2+) as cofactor. In terms of processing, the conversion to 3-oxoalanine (also known as C-formylglycine, FGly), of a serine or cysteine residue in prokaryotes and of a cysteine residue in eukaryotes, is critical for catalytic activity. This post-translational modification is severely defective in multiple sulfatase deficiency (MSD).

It localises to the endoplasmic reticulum. It is found in the lysosome. It catalyses the reaction an N-acyl-1-beta-D-(3-O-sulfo)-galactosyl-sphing-4-enine + H2O = a beta-D-galactosyl-(1&lt;-&gt;1')-N-acylsphing-4-enine + sulfate + H(+). In terms of biological role, hydrolyzes cerebroside sulfate. The sequence is that of Arylsulfatase A (Arsa) from Mus musculus (Mouse).